The sequence spans 213 residues: Superoxide dismutase [Mn] (213 aa).

Positions 27, 82, 168, and 172 each coordinate Mn(2+).

This sequence belongs to the iron/manganese superoxide dismutase family. As to quaternary structure, homodimer.

It catalyses the reaction 2 superoxide + 2 H(+) = H2O2 + O2. Inhibited by hydrogen peroxide. Functionally, destroys superoxide anion radicals which are normally produced within the cells and which are toxic to biological systems. In Haemophilus ducreyi (strain 35000HP / ATCC 700724), this protein is Superoxide dismutase [Mn] (sodA).